The following is a 405-amino-acid chain: K(+)/H(+) antiporter subunit KhtU (405 aa).

12 consecutive transmembrane segments (helical) span residues 3–23 (HLVFEVGTALVLVAIASVIAN), 29–49 (IIPFLIVLGMLVGPHAPKMGI), 60–80 (IIEFFGRMGVLFLLFYLGLEF), 85–105 (LIKSGKSIAVGGTIYILINFS), 108–128 (LLYGFITGFSFLEVLILAGVI), 153–173 (LILGIIMFEDIFLAVYLSVVS), 183–203 (VGSALLSILIAFGYMLLFFIA), 222–242 (VFIIVIFAALFFIAGFSETIH), 268–288 (LVVPFRDFFGAMFFFSFGLSI), 297–317 (VWLALGAVILTILGNFIAGMV), 332–352 (IGLTIVSRGEFSIIVANLGIA), and 357–377 (ATLKPFAALYVLILAILGPLV).

The protein belongs to the monovalent cation:proton antiporter 2 (CPA2) transporter (TC 2.A.37) family. The transporter is composed of the integral membrane protein KhtU and the regulatory protein KhtT.

It localises to the cell membrane. Potassium antiport activity requires the presence of KhtT. Activity is also modulated by KhtS. Has higher activity at alkaline pH. Its function is as follows. Potassium/proton antiporter that mediates the efflux of potassium ions from the cell. Can also mediate rubidium/proton antiport, but has no permeability for sodium or lithium ions. In the absence of KhtT, does not have antiport activity, but can catalyze potassium efflux. Involved in protection of the cell from methylglyoxal, a toxic by-product of glycolysis, via activation by S-lactoyl-BSH of the antiporter activity, leading to cytoplasmic acidification and methylglyoxal resistance. In Bacillus subtilis (strain 168), this protein is K(+)/H(+) antiporter subunit KhtU.